The chain runs to 487 residues: Probable cytochrome P450 513B1 (487 aa).

A helical transmembrane segment spans residues 1–18; it reads MNLLVLSVILAIIIYLIF. Cys433 lines the heme pocket.

This sequence belongs to the cytochrome P450 family. Heme serves as cofactor.

The protein localises to the membrane. This is Probable cytochrome P450 513B1 (cyp513B1) from Dictyostelium discoideum (Social amoeba).